We begin with the raw amino-acid sequence, 135 residues long: Large ribosomal subunit protein uL16 (135 aa).

Belongs to the universal ribosomal protein uL16 family. As to quaternary structure, part of the 50S ribosomal subunit.

Functionally, binds 23S rRNA and is also seen to make contacts with the A and possibly P site tRNAs. The polypeptide is Large ribosomal subunit protein uL16 (Desulforapulum autotrophicum (strain ATCC 43914 / DSM 3382 / VKM B-1955 / HRM2) (Desulfobacterium autotrophicum)).